An 85-amino-acid chain; its full sequence is UPF0335 protein BH15140 (85 aa).

The protein belongs to the UPF0335 family.

This chain is UPF0335 protein BH15140, found in Bartonella henselae (strain ATCC 49882 / DSM 28221 / CCUG 30454 / Houston 1) (Rochalimaea henselae).